Here is an 89-residue protein sequence, read N- to C-terminus: Signal recognition particle 19 kDa protein (89 aa).

Belongs to the SRP19 family. Part of the signal recognition particle protein translocation system, which is composed of SRP and FtsY. Archaeal SRP consists of a 7S RNA molecule of 300 nucleotides and two protein subunits: SRP54 and SRP19.

The protein resides in the cytoplasm. Involved in targeting and insertion of nascent membrane proteins into the cytoplasmic membrane. Binds directly to 7S RNA and mediates binding of the 54 kDa subunit of the SRP. The protein is Signal recognition particle 19 kDa protein of Methanococcus maripaludis (strain C5 / ATCC BAA-1333).